We begin with the raw amino-acid sequence, 507 residues long: Ribose import ATP-binding protein RbsA 2 (507 aa).

2 ABC transporter domains span residues 7–245 and 249–498; these read FSLD…VGRN and LFTR…MPQS. An ATP-binding site is contributed by 39 to 46; the sequence is GENGAGKS.

It belongs to the ABC transporter superfamily. Ribose importer (TC 3.A.1.2.1) family. In terms of assembly, the complex is composed of an ATP-binding protein (RbsA), two transmembrane proteins (RbsC) and a solute-binding protein (RbsB).

It localises to the cell inner membrane. It catalyses the reaction D-ribose(out) + ATP + H2O = D-ribose(in) + ADP + phosphate + H(+). In terms of biological role, part of the ABC transporter complex RbsABC involved in ribose import. Responsible for energy coupling to the transport system. This Mesorhizobium japonicum (strain LMG 29417 / CECT 9101 / MAFF 303099) (Mesorhizobium loti (strain MAFF 303099)) protein is Ribose import ATP-binding protein RbsA 2.